Reading from the N-terminus, the 1485-residue chain is Cystic fibrosis transmembrane conductance regulator (1485 aa).

Topologically, residues 1-78 (MQRSPVEDAN…SLLRAMARCY (78 aa)) are cytoplasmic. A helical membrane pass occupies residues 79–99 (IKPFLLFGFLLYIGEATKTVQ). In terms of domain architecture, ABC transmembrane type-1 1 spans 83 to 353 (LLFGFLLYIG…CMVLRMTVTR (271 aa)). The Extracellular portion of the chain corresponds to 100–123 (PQLLGRIIASFDPAHEPERANGYF). A helical membrane pass occupies residues 124-149 (LAFGLGLLFTARFLLLQPAMFGLHHL). Residues 150–195 (GMQIRIALFSIIYKKTLKLSSRVLDKISTGQLVSLMSANLGKFDQS) lie on the Cytoplasmic side of the membrane. A helical membrane pass occupies residues 196 to 216 (LGMAHFIWISPLQCILCTGLI). The Extracellular portion of the chain corresponds to 217–224 (WELIDVNS). A helical transmembrane segment spans residues 225-245 (FCALAAISLLGVLQAFLSHKM). Residues 246-299 (GPYKAQKVLLTNKRLALTSEIMENLHSVKAYGWEEIMETLIKNIRQDEVKLTRK) lie on the Cytoplasmic side of the membrane. A helical membrane pass occupies residues 300–320 (IGSLRYFYSSAYFFSAIFVIV). The Extracellular portion of the chain corresponds to 321 to 340 (AAVVPHALSRGINLRRIFTT). Residues 341–363 (LSYCMVLRMTVTRQLPGSIQMWY) form a helical membrane-spanning segment. Residues 364 to 856 (DTMRLIWKIE…YVRYVSNNKS (493 aa)) are Cytoplasmic-facing. ATP contacts are provided by residues W402, 457–464 (GSMGSGKS), and Q492. The 222-residue stretch at 424-645 (NGDAGLFFTN…RPDFSSLLLG (222 aa)) folds into the ABC transporter 1 domain. Residues 653-826 (SAERRCSILT…GILEEENIEA (174 aa)) form a disordered R region region. The helical transmembrane segment at 857 to 877 (LLYVLIFILFIAAIEIAGSVA) threads the bilayer. Positions 860–1163 (VLIFILFIAA…CVATSIAVDG (304 aa)) constitute an ABC transmembrane type-1 2 domain. Over 878 to 924 (GIFLITDELWREEHQRSEPNMTKHSNASSSGQTYAITVTPTSSYYIL) the chain is Extracellular. N-linked (GlcNAc...) asparagine glycans are attached at residues N897 and N903. Residues 925–946 (YIYVATSESLLAMGFFRGLPFV) traverse the membrane as a discontinuously helical segment. The Cytoplasmic portion of the chain corresponds to 947-996 (HTTITISKKLHQKMLHAVLSAPMSVLNTMKTGRIMNRFTKDMATIDDMLP). The chain crosses the membrane as a helical span at residues 997-1019 (LLMFDFVQLTVVVVGCILVVSIV). The Extracellular segment spans residues 1020–1021 (RP). A helical membrane pass occupies residues 1022-1042 (YIFLAATPLAIIFIVMRKYFL). Over 1043-1103 (RTGQQLKQLE…TATWFLYLST (61 aa)) the chain is Cytoplasmic. Residues 1104-1124 (LRWFLFRADILFVFFFTLAAW) form a helical membrane-spanning segment. Topologically, residues 1125 to 1138 (IAVGTNQDKPGEIG) are extracellular. A helical transmembrane segment spans residues 1139-1159 (IIICLAMLILGTFQWCVATSI). Residues 1160–1485 (AVDGMMRSVD…AEDNIQDTRL (326 aa)) lie on the Cytoplasmic side of the membrane. Positions 1211–1444 (IEVRNLTVKY…TSHLKQAISP (234 aa)) constitute an ABC transporter 2 domain. Residues Y1220 and 1245-1252 (GRTGSGKS) contribute to the ATP site. The tract at residues 1452 to 1485 (PRRNSSMRTPQSKLSSVTQTLQEEAEDNIQDTRL) is disordered. The span at 1454–1473 (RNSSMRTPQSKLSSVTQTLQ) shows a compositional bias: polar residues. A compositionally biased stretch (acidic residues) spans 1474–1485 (EEAEDNIQDTRL). A PDZ-binding motif is present at residues 1483 to 1485 (TRL).

This sequence belongs to the ABC transporter superfamily. ABCC family. CFTR transporter (TC 3.A.1.202) subfamily. As to quaternary structure, monomer; does not require oligomerization for channel activity. Interacts with cse1l; this interaction may down-regulate cftr activity. Phosphorylated; this activates the channel. Dephosphorylation strongly decreases ATPase activity. Phosphorylation at PKA sites activates the channel. Phosphorylation at PKC sites enhances the response to phosphorylation by PKA. In terms of tissue distribution, detected in gut epithelium (at protein level). Detected in kidney, spleen, intestine and liver. Detected in pancreatic duct epithelium at 5 dpf and throughout adult life.

The protein resides in the apical cell membrane. Its subcellular location is the early endosome membrane. The protein localises to the cell membrane. It is found in the recycling endosome membrane. It localises to the endoplasmic reticulum membrane. The catalysed reaction is ATP + H2O + closed Cl(-) channel = ADP + phosphate + open Cl(-) channel.. The enzyme catalyses chloride(in) = chloride(out). It carries out the reaction hydrogencarbonate(in) = hydrogencarbonate(out). It catalyses the reaction ATP + H2O = ADP + phosphate + H(+). In terms of biological role, epithelial ion channel that plays an important role in the regulation of epithelial ion and water transport and fluid homeostasis. Mediates the transport of chloride ions across the cell membrane. Possesses an intrinsic ATPase activity and utilizes ATP to gate its channel; the passive flow of anions through the channel is gated by cycles of ATP binding and hydrolysis by the ATP-binding domains. The ion channel is also permeable to HCO(3)(-); selectivity depends on the extracellular chloride concentration. Exerts its function also by modulating the activity of other ion channels and transporters. Contributes to the regulation of the pH and the ion content of the epithelial fluid layer. Required for normal fluid homeostasis in the gut. Required for normal volume expansion and cell shape changes of Kupffer's vesicle during embryonic development and for normal establishment of left-right body patterning. Required for normal resistance to infection by P.aeruginosa strain PA14 and strain SMC573. In Danio rerio (Zebrafish), this protein is Cystic fibrosis transmembrane conductance regulator.